The primary structure comprises 393 residues: S-adenosylmethionine synthase (393 aa).

Glu-9 is a Mg(2+) binding site. His-15 contacts ATP. Residue Glu-43 coordinates K(+). L-methionine contacts are provided by Glu-56 and Gln-99. ATP is bound by residues 167–169 (DGK), 235–238 (SGRF), Asp-246, 252–253 (RK), Ala-269, Lys-273, and Lys-277. Asp-246 contributes to the L-methionine binding site. L-methionine is bound at residue Lys-277.

Belongs to the AdoMet synthase family. As to quaternary structure, homotetramer. It depends on Mn(2+) as a cofactor. Requires Mg(2+) as cofactor. Co(2+) is required as a cofactor. K(+) serves as cofactor.

The protein localises to the cytoplasm. It carries out the reaction L-methionine + ATP + H2O = S-adenosyl-L-methionine + phosphate + diphosphate. Its pathway is amino-acid biosynthesis; S-adenosyl-L-methionine biosynthesis; S-adenosyl-L-methionine from L-methionine: step 1/1. Catalyzes the formation of S-adenosylmethionine from methionine and ATP. The reaction comprises two steps that are both catalyzed by the same enzyme: formation of S-adenosylmethionine (AdoMet) and triphosphate, and subsequent hydrolysis of the triphosphate. The chain is S-adenosylmethionine synthase (SAMS) from Brassica rapa subsp. pekinensis (Chinese cabbage).